The sequence spans 534 residues: Probable DNA ligase (534 aa).

E213 lines the ATP pocket. The N6-AMP-lysine intermediate role is filled by K215. ATP-binding residues include R220, R235, E264, F303, R375, and K381.

Belongs to the ATP-dependent DNA ligase family. It depends on Mg(2+) as a cofactor.

It catalyses the reaction ATP + (deoxyribonucleotide)n-3'-hydroxyl + 5'-phospho-(deoxyribonucleotide)m = (deoxyribonucleotide)n+m + AMP + diphosphate.. Functionally, DNA ligase that seals nicks in double-stranded DNA during DNA replication, DNA recombination and DNA repair. This Mycolicibacterium vanbaalenii (strain DSM 7251 / JCM 13017 / BCRC 16820 / KCTC 9966 / NRRL B-24157 / PYR-1) (Mycobacterium vanbaalenii) protein is Probable DNA ligase.